The chain runs to 371 residues: uncharacterized protein (371 aa).

The disordered stretch occupies residues 339-371; that stretch reads KVTHEDLVKNRPRSPVRPPIPATAKTPDLPERH.

This is an uncharacterized protein from Escherichia coli (strain K12).